A 482-amino-acid chain; its full sequence is tRNA sulfurtransferase (482 aa).

The THUMP domain maps to 61-165 (AEVLEILTHT…GDKLNQVLAR (105 aa)). Residues 183-184 (LI), Lys265, Gly287, and Gln296 contribute to the ATP site. An intrachain disulfide couples Cys344 to Cys456. The 79-residue stretch at 404–482 (VEEHAVVLDI…GFNNVKVYRP (79 aa)) folds into the Rhodanese domain. Cys456 (cysteine persulfide intermediate) is an active-site residue.

This sequence belongs to the ThiI family.

The protein resides in the cytoplasm. The catalysed reaction is [ThiI sulfur-carrier protein]-S-sulfanyl-L-cysteine + a uridine in tRNA + 2 reduced [2Fe-2S]-[ferredoxin] + ATP + H(+) = [ThiI sulfur-carrier protein]-L-cysteine + a 4-thiouridine in tRNA + 2 oxidized [2Fe-2S]-[ferredoxin] + AMP + diphosphate. It carries out the reaction [ThiS sulfur-carrier protein]-C-terminal Gly-Gly-AMP + S-sulfanyl-L-cysteinyl-[cysteine desulfurase] + AH2 = [ThiS sulfur-carrier protein]-C-terminal-Gly-aminoethanethioate + L-cysteinyl-[cysteine desulfurase] + A + AMP + 2 H(+). Its pathway is cofactor biosynthesis; thiamine diphosphate biosynthesis. Its function is as follows. Catalyzes the ATP-dependent transfer of a sulfur to tRNA to produce 4-thiouridine in position 8 of tRNAs, which functions as a near-UV photosensor. Also catalyzes the transfer of sulfur to the sulfur carrier protein ThiS, forming ThiS-thiocarboxylate. This is a step in the synthesis of thiazole, in the thiamine biosynthesis pathway. The sulfur is donated as persulfide by IscS. In Vibrio parahaemolyticus serotype O3:K6 (strain RIMD 2210633), this protein is tRNA sulfurtransferase.